A 754-amino-acid polypeptide reads, in one-letter code: MTVGAGISVTDSDLVVLGHRVLHGVPENVLVTPASGNALIDGAFIGVTSDQTGSHRVFSLGKLEDLRFMCVFRFKLWWMTQRMGTNGKEIPCETQFLIVEANQGSDLGGRDQSSSYVVFLPILEGDFRAVLQGNEANELEICLESGDPTVDQFEGSHLVFVAAGSDPFDVITKAVKAVEQHLQTFSHRERKKMPDMLNWFGWCTWDAFYTNVTAKDVKQGLESLKAGGVTPKFVIIDDGWQSVGMDETSVEFNADNAANFANRLTHIKENHKFQKDGKEGHRVDDPSLSLGHVITDIKSNNSLKYVYVWHAITGYWGGVKPGVSGMEHYESKVAYPVSSPGVMSSENCGCLESITKNGLGLVNPEKVFSFYNDLHSYLASVGVDGVKVDVQNILETLGAGHGGRVKLAKKYHQALEASISRNFPDNGIISCMSHNTDGLYSAKKTAVIRASDDFWPRDPASHTIHIASVAYNTLFLGEFMQPDWDMFHSLHPMAEYHAAARAVGGCAIYVSDKPGQHDFNLLRKLVLRDGSILRAKLPGRPTSDCFFSDPVRDNKSLLKIWNLNEFTGVIGVFNCQGAGWCKNEKRYLIHDQEPGTISGCVRTNDVHYLHKVAAFEWTGDSIVYSHLRGELVYLPKDTSLPVTLMPREYEVFTVVPVKEFSDGSKFAPVGLMEMFNSGGAIVSLRYDDEGTKFVVRMKLRGSGLVGVYSSVRRPRSVTVDSDDVEYRYEPESGLVTFTLGVPEKELYLWDVVIQ.

This sequence belongs to the glycosyl hydrolases 36 family.

The enzyme catalyses alpha-D-galactosyl-(1-&gt;3)-1D-myo-inositol + sucrose = raffinose + myo-inositol. Its function is as follows. Transglycosidase operating by a ping-pong reaction mechanism. Involved in the synthesis of raffinose, a major soluble carbohydrate in seeds, roots and tubers. This chain is Probable galactinol--sucrose galactosyltransferase 1 (RFS1), found in Arabidopsis thaliana (Mouse-ear cress).